We begin with the raw amino-acid sequence, 132 residues long: uncharacterized protein (132 aa).

To M.jannaschii MJ0661.

This is an uncharacterized protein from Helicobacter pylori (strain ATCC 700392 / 26695) (Campylobacter pylori).